The primary structure comprises 267 residues: Chlorophyll a-b binding protein 3A, chloroplastic (267 aa).

The N-terminal 34 residues, 1–34, are a transit peptide targeting the chloroplast; the sequence is MAASTMALSSSTFAGKTVKLAPSSSEITGNGRIT. The chain crosses the membrane as a helical span at residues 153 to 173; that stretch reads LVHAQSILAIWACQVVLMGAV. Chlorophyll b is bound by residues Val154, Ser158, Gln166, Glu174, Arg177, and Leu183. The chlorophyll a site is built by Lys214, Glu215, Asn218, Arg220, Gln232, His247, and Ala256. The chain crosses the membrane as a helical span at residues 221–241; the sequence is LAMFSMFGFFVQAIVTGKGPL. Position 263 (Phe263) interacts with chlorophyll b.

It belongs to the light-harvesting chlorophyll a/b-binding (LHC) protein family. In terms of assembly, the LHC complex consists of chlorophyll a-b binding proteins. Requires Binds at least 14 chlorophylls (8 Chl-a and 6 Chl-b) and carotenoids such as lutein and neoxanthin. as cofactor. Post-translationally, photoregulated by reversible phosphorylation of its threonine residues.

It is found in the plastid. It localises to the chloroplast thylakoid membrane. The light-harvesting complex (LHC) functions as a light receptor, it captures and delivers excitation energy to photosystems with which it is closely associated. This chain is Chlorophyll a-b binding protein 3A, chloroplastic (CAB3A), found in Solanum lycopersicum (Tomato).